A 154-amino-acid polypeptide reads, in one-letter code: Transcriptional repressor NrdR (154 aa).

A zinc finger lies at 3 to 34 (CPYCQSEDTQVKDSRPAEDGAAIRRRRACPVC). The 91-residue stretch at 49-139 (LVVVKRTGRK…VYRNFREAKD (91 aa)) folds into the ATP-cone domain.

The protein belongs to the NrdR family. Zn(2+) serves as cofactor.

Functionally, negatively regulates transcription of bacterial ribonucleotide reductase nrd genes and operons by binding to NrdR-boxes. The chain is Transcriptional repressor NrdR from Chelativorans sp. (strain BNC1).